A 472-amino-acid polypeptide reads, in one-letter code: Chromosomal replication initiator protein DnaA (472 aa).

The tract at residues 1-80 (MDTKQIWFTT…YQVNVRVIIS (80 aa)) is domain I, interacts with DnaA modulators. The tract at residues 80–130 (SSATPAPSEPVAVTPSEPSPTTEVAEPSFASFNQAAPMLNQLPLGDPNRSS) is domain II. The tract at residues 131 to 347 (VLNPRYTFSS…GCLNRVIAYA (217 aa)) is domain III, AAA+ region. The ATP site is built by glycine 175, glycine 177, lysine 178, and threonine 179. The tract at residues 348 to 472 (NLNRTPVTVE…RQRLYGENAR (125 aa)) is domain IV, binds dsDNA.

It belongs to the DnaA family. In terms of assembly, oligomerizes as a right-handed, spiral filament on DNA at oriC.

It localises to the cytoplasm. Functionally, plays an essential role in the initiation and regulation of chromosomal replication. ATP-DnaA binds to the origin of replication (oriC) to initiate formation of the DNA replication initiation complex once per cell cycle. Binds the DnaA box (a 9 base pair repeat at the origin) and separates the double-stranded (ds)DNA. Forms a right-handed helical filament on oriC DNA; dsDNA binds to the exterior of the filament while single-stranded (ss)DNA is stabiized in the filament's interior. The ATP-DnaA-oriC complex binds and stabilizes one strand of the AT-rich DNA unwinding element (DUE), permitting loading of DNA polymerase. After initiation quickly degrades to an ADP-DnaA complex that is not apt for DNA replication. Binds acidic phospholipids. The protein is Chromosomal replication initiator protein DnaA of Herpetosiphon aurantiacus (strain ATCC 23779 / DSM 785 / 114-95).